We begin with the raw amino-acid sequence, 285 residues long: 4-hydroxybenzoate octaprenyltransferase (285 aa).

A run of 7 helical transmembrane segments spans residues 17-37 (PVGIFLLLWPTLWALWIAGAG), 41-61 (PKVLLVFVAGVALMRSAGCVI), 92-112 (LLLFAGLCLVAFGLVLLLNPL), 135-155 (HWPQAYLGAAFGWAVPMAFAA), 158-178 (GTVPIAAWLLFIATVLWATVY), 216-236 (ALLLLLFWIGYREGLGFYYYL), and 263-283 (AFLNNNAFGAVIFGGIALHYL).

This sequence belongs to the UbiA prenyltransferase family. It depends on Mg(2+) as a cofactor.

The protein localises to the cell inner membrane. The catalysed reaction is all-trans-octaprenyl diphosphate + 4-hydroxybenzoate = 4-hydroxy-3-(all-trans-octaprenyl)benzoate + diphosphate. The protein operates within cofactor biosynthesis; ubiquinone biosynthesis. Catalyzes the prenylation of para-hydroxybenzoate (PHB) with an all-trans polyprenyl group. Mediates the second step in the final reaction sequence of ubiquinone-8 (UQ-8) biosynthesis, which is the condensation of the polyisoprenoid side chain with PHB, generating the first membrane-bound Q intermediate 3-octaprenyl-4-hydroxybenzoate. This chain is 4-hydroxybenzoate octaprenyltransferase, found in Nitrosococcus oceani (strain ATCC 19707 / BCRC 17464 / JCM 30415 / NCIMB 11848 / C-107).